The chain runs to 1008 residues: Ubiquitin carboxyl-terminal hydrolase 16 (1008 aa).

A helical membrane pass occupies residues 7–27 (LGISSLVLVVSLVLPLIGLFV). 8 residues coordinate Zn(2+): Cys-74, Cys-77, Cys-85, Cys-88, Cys-94, Cys-98, His-107, and Cys-111. The MYND-type zinc finger occupies 74–111 (CPVCYCLATTRCSRCKAVRYCSGKCQIIHWRQGHKDEC). Disordered stretches follow at residues 122 to 149 (DESD…GPEP), 159 to 178 (LSNR…DNKD), 187 to 233 (VSVA…LDAH), 275 to 309 (SVHK…DPSL), and 326 to 379 (SDSC…YISD). Low complexity predominate over residues 193–203 (SGSSFSGFSSS). Positions 222-233 (ESERSESLLDAH) are enriched in basic and acidic residues. Polar residues predominate over residues 284–295 (GQNQSQSRSLHS). The span at 340-351 (SSLHFSFGSGSS) shows a compositional bias: low complexity. The USP domain maps to 542 to 847 (CGLINVGNSC…GAYMLFYARC (306 aa)). Cys-551 serves as the catalytic Nucleophile. The active-site Proton acceptor is His-807. Disordered stretches follow at residues 859–905 (KTEA…GNIQ) and 952–1008 (FIFG…GGER). Composition is skewed to low complexity over residues 878-888 (STISRSVSTSS) and 965-992 (SETP…RSSP).

The protein belongs to the peptidase C19 family. In terms of assembly, interacts with SHM1 and SHM4. Interacts with HIPP27. Expressed in flowers, siliques, rosette leaves, cauline leaves, stems and at a lower level in roots. In roots, expressed in the sieve elements.

It localises to the membrane. The enzyme catalyses Thiol-dependent hydrolysis of ester, thioester, amide, peptide and isopeptide bonds formed by the C-terminal Gly of ubiquitin (a 76-residue protein attached to proteins as an intracellular targeting signal).. In terms of biological role, recognizes and hydrolyzes the peptide bond at the C-terminal Gly of ubiquitin. Involved in the processing of poly-ubiquitin precursors as well as that of ubiquitinated proteins. Involved in salt tolerance by modulating sodium transport activity and repressing cell death at least partially through modulating SHM1 stability and activity. Involved in cadmium tolerance by interacting with HIPP27 and probably modulating its stability. The polypeptide is Ubiquitin carboxyl-terminal hydrolase 16 (UBP16) (Arabidopsis thaliana (Mouse-ear cress)).